The chain runs to 580 residues: Benzoate--CoA ligase, peroxisomal (580 aa).

The short motif at 578–580 (SRL) is the Microbody targeting signal element.

Belongs to the ATP-dependent AMP-binding enzyme family.

It localises to the peroxisome. The enzyme catalyses benzoate + ATP + CoA = benzoyl-CoA + AMP + diphosphate. In terms of biological role, benzoate--CoA ligase involved in benzoyloxyglucosinolate biosynthesis in seeds. Glucosinolates are secondary metabolites involved in pathogen and insect defense of cruciferous plants. This Arabidopsis thaliana (Mouse-ear cress) protein is Benzoate--CoA ligase, peroxisomal (AAE20).